The following is a 288-amino-acid chain: MSLDDLQAATKIQKRYLTALEEGNYDIIPGKFYVRAFIKQYAEAVGLDADQLFEEHKKDIPNTYHDDVSEKISGMNLQKEMPKPASKALELLPTILVILGVIVVIAIVYAIIQFANHKNSDDHNAASEKAITQSESKYEIPKDSTLKENQNNSSEKETDTKKETKENEDKKKENDSEKLEIKAAGTEGSLTTYEVSGADKIELELKASDSSWIRVRDENSSSLKEGTLKKDETYKKDITDQKQVDIRTGYAPNLKIKINGKVLSYELDPKKVMAQTIKIVNKKEEKSS.

The chain crosses the membrane as a helical span at residues 92-112 (LPTILVILGVIVVIAIVYAII). Residues 121-183 (DDHNAASEKA…NDSEKLEIKA (63 aa)) are disordered. Composition is skewed to basic and acidic residues over residues 136-146 (SKYEIPKDSTL) and 154-181 (SEKETDTKKETKENEDKKKENDSEKLEI). Positions 147–185 (KENQNNSSEKETDTKKETKENEDKKKENDSEKLEIKAAG) form a coiled coil.

The protein localises to the cell membrane. This is an uncharacterized protein from Bacillus subtilis (strain 168).